The following is a 402-amino-acid chain: D-galactonate dehydratase family member RspA (402 aa).

N37 and H122 together coordinate substrate. Y159 functions as the Proton donor/acceptor in the catalytic mechanism. D210 serves as a coordination point for Mg(2+). H212 acts as the Proton donor/acceptor in catalysis. Mg(2+)-binding residues include E236 and E262. Substrate-binding residues include E262, R283, H312, D316, and E339.

This sequence belongs to the mandelate racemase/muconate lactonizing enzyme family. GalD subfamily. Requires Mg(2+) as cofactor.

It carries out the reaction D-mannonate = 2-dehydro-3-deoxy-D-gluconate + H2O. Has low D-mannonate dehydratase activity (in vitro), suggesting that this is not a physiological substrate and that it has no significant role in D-mannonate degradation in vivo. Has no detectable activity with a panel of 70 other acid sugars (in vitro). This Cellvibrio japonicus (strain Ueda107) (Pseudomonas fluorescens subsp. cellulosa) protein is D-galactonate dehydratase family member RspA (rspA).